Here is a 246-residue protein sequence, read N- to C-terminus: DNA polymerase sliding clamp (246 aa).

Belongs to the PCNA family. As to quaternary structure, homotrimer. The subunits circularize to form a toroid; DNA passes through its center. Replication factor C (RFC) is required to load the toroid on the DNA.

Its function is as follows. Sliding clamp subunit that acts as a moving platform for DNA processing. Responsible for tethering the catalytic subunit of DNA polymerase and other proteins to DNA during high-speed replication. This Methanocella arvoryzae (strain DSM 22066 / NBRC 105507 / MRE50) protein is DNA polymerase sliding clamp.